Reading from the N-terminus, the 157-residue chain is ATP synthase subunit b (157 aa).

The chain crosses the membrane as a helical span at residues 7–29 (LISQAIAFSLFILFTARFVWPYL).

This sequence belongs to the ATPase B chain family. F-type ATPases have 2 components, F(1) - the catalytic core - and F(0) - the membrane proton channel. F(1) has five subunits: alpha(3), beta(3), gamma(1), delta(1), epsilon(1). F(0) has three main subunits: a(1), b(2) and c(10-14). The alpha and beta chains form an alternating ring which encloses part of the gamma chain. F(1) is attached to F(0) by a central stalk formed by the gamma and epsilon chains, while a peripheral stalk is formed by the delta and b chains.

It localises to the cell inner membrane. Its function is as follows. F(1)F(0) ATP synthase produces ATP from ADP in the presence of a proton or sodium gradient. F-type ATPases consist of two structural domains, F(1) containing the extramembraneous catalytic core and F(0) containing the membrane proton channel, linked together by a central stalk and a peripheral stalk. During catalysis, ATP synthesis in the catalytic domain of F(1) is coupled via a rotary mechanism of the central stalk subunits to proton translocation. Functionally, component of the F(0) channel, it forms part of the peripheral stalk, linking F(1) to F(0). The chain is ATP synthase subunit b from Nitrosomonas europaea (strain ATCC 19718 / CIP 103999 / KCTC 2705 / NBRC 14298).